A 469-amino-acid polypeptide reads, in one-letter code: 3-isopropylmalate dehydratase large subunit (469 aa).

3 residues coordinate [4Fe-4S] cluster: C347, C408, and C411.

The protein belongs to the aconitase/IPM isomerase family. LeuC type 1 subfamily. Heterodimer of LeuC and LeuD. [4Fe-4S] cluster is required as a cofactor.

The enzyme catalyses (2R,3S)-3-isopropylmalate = (2S)-2-isopropylmalate. The protein operates within amino-acid biosynthesis; L-leucine biosynthesis; L-leucine from 3-methyl-2-oxobutanoate: step 2/4. Functionally, catalyzes the isomerization between 2-isopropylmalate and 3-isopropylmalate, via the formation of 2-isopropylmaleate. This is 3-isopropylmalate dehydratase large subunit from Actinobacillus succinogenes (strain ATCC 55618 / DSM 22257 / CCUG 43843 / 130Z).